The chain runs to 106 residues: Thiosulfate sulfurtransferase GlpE (106 aa).

In terms of domain architecture, Rhodanese spans 17-105 (SRGEARLVDI…WHRASLPVEA (89 aa)). Cys65 serves as the catalytic Cysteine persulfide intermediate.

Belongs to the GlpE family.

Its subcellular location is the cytoplasm. It catalyses the reaction thiosulfate + hydrogen cyanide = thiocyanate + sulfite + 2 H(+). The enzyme catalyses thiosulfate + [thioredoxin]-dithiol = [thioredoxin]-disulfide + hydrogen sulfide + sulfite + 2 H(+). Transferase that catalyzes the transfer of sulfur from thiosulfate to thiophilic acceptors such as cyanide or dithiols. May function in a CysM-independent thiosulfate assimilation pathway by catalyzing the conversion of thiosulfate to sulfite, which can then be used for L-cysteine biosynthesis. This is Thiosulfate sulfurtransferase GlpE from Vibrio vulnificus (strain CMCP6).